The primary structure comprises 509 residues: Anaerobic nitric oxide reductase transcription regulator NorR (509 aa).

At Asp56 the chain carries 4-aspartylphosphate. One can recognise a Sigma-54 factor interaction domain in the interval 186-415 (MIGRSPAMDR…LEHAIHRAAV (230 aa)). ATP-binding positions include 214-221 (GETGVGKE) and 277-286 (ADKGTLFLDE). The H-T-H motif DNA-binding region spans 484-503 (WAATARALEMDGGNLHRLAR).

It functions in the pathway nitrogen metabolism; nitric oxide reduction. Its function is as follows. Required for the expression of anaerobic nitric oxide (NO) reductase, acts as a transcriptional activator for at least the norVW operon. Activation also requires sigma-54. This Aeromonas salmonicida (strain A449) protein is Anaerobic nitric oxide reductase transcription regulator NorR.